The primary structure comprises 347 residues: Holliday junction branch migration complex subunit RuvB (347 aa).

Residues 4 to 186 form a large ATPase domain (RuvB-L) region; the sequence is INEYGSERIV…FGMIFEMNFY (183 aa). ATP contacts are provided by residues leucine 25, arginine 26, glycine 67, lysine 70, threonine 71, threonine 72, 133–135, arginine 176, tyrosine 186, and arginine 223; that span reads EDF. Threonine 71 is a binding site for Mg(2+). The interval 187–257 is small ATPAse domain (RuvB-S); sequence TQEELKMIIT…IVEEVMRLLG (71 aa). The head domain (RuvB-H) stretch occupies residues 260–347; sequence EFGLDEMDRK…GLFDGFGNIE (88 aa). DNA contacts are provided by arginine 315 and arginine 320.

It belongs to the RuvB family. Homohexamer. Forms an RuvA(8)-RuvB(12)-Holliday junction (HJ) complex. HJ DNA is sandwiched between 2 RuvA tetramers; dsDNA enters through RuvA and exits via RuvB. An RuvB hexamer assembles on each DNA strand where it exits the tetramer. Each RuvB hexamer is contacted by two RuvA subunits (via domain III) on 2 adjacent RuvB subunits; this complex drives branch migration. In the full resolvosome a probable DNA-RuvA(4)-RuvB(12)-RuvC(2) complex forms which resolves the HJ.

Its subcellular location is the cytoplasm. It carries out the reaction ATP + H2O = ADP + phosphate + H(+). Its function is as follows. The RuvA-RuvB-RuvC complex processes Holliday junction (HJ) DNA during genetic recombination and DNA repair, while the RuvA-RuvB complex plays an important role in the rescue of blocked DNA replication forks via replication fork reversal (RFR). RuvA specifically binds to HJ cruciform DNA, conferring on it an open structure. The RuvB hexamer acts as an ATP-dependent pump, pulling dsDNA into and through the RuvAB complex. RuvB forms 2 homohexamers on either side of HJ DNA bound by 1 or 2 RuvA tetramers; 4 subunits per hexamer contact DNA at a time. Coordinated motions by a converter formed by DNA-disengaged RuvB subunits stimulates ATP hydrolysis and nucleotide exchange. Immobilization of the converter enables RuvB to convert the ATP-contained energy into a lever motion, pulling 2 nucleotides of DNA out of the RuvA tetramer per ATP hydrolyzed, thus driving DNA branch migration. The RuvB motors rotate together with the DNA substrate, which together with the progressing nucleotide cycle form the mechanistic basis for DNA recombination by continuous HJ branch migration. Branch migration allows RuvC to scan DNA until it finds its consensus sequence, where it cleaves and resolves cruciform DNA. This is Holliday junction branch migration complex subunit RuvB from Fervidobacterium nodosum (strain ATCC 35602 / DSM 5306 / Rt17-B1).